The primary structure comprises 193 residues: Ion-translocating oxidoreductase complex subunit A (193 aa).

Transmembrane regions (helical) follow at residues 5–25 (LLLFVGTVLVNNFVLVKFLGL), 39–59 (IGMGLATTFVLTLASVCAWMV), 62–82 (FILLPLGLIYLRTLAFILVIA), 102–122 (LLGIFLPLITTNCAVLGVALL), 134–154 (AVYGFSAAAGFSLVMVLFAAI), and 171–191 (SIALITAGLMSLAFMGFTGLV).

This sequence belongs to the NqrDE/RnfAE family. In terms of assembly, the complex is composed of six subunits: RnfA, RnfB, RnfC, RnfD, RnfE and RnfG.

It localises to the cell inner membrane. Its function is as follows. Part of a membrane-bound complex that couples electron transfer with translocation of ions across the membrane. In Yersinia pestis (strain Pestoides F), this protein is Ion-translocating oxidoreductase complex subunit A.